We begin with the raw amino-acid sequence, 709 residues long: Pentatricopeptide repeat-containing protein At5g42310, chloroplastic (709 aa).

The N-terminal 54 residues, 1–54 (MLLLQQPPLVSTRFHSLYFLTHHHHHHHRFFQPPISAFSATTSASLPSPSPSSS), are a transit peptide targeting the chloroplast. PPR repeat units follow at residues 196–230 (TPLT…GYQS), 231–267 (DFVN…KLEL), 268–302 (DVQL…GLSA), 303–337 (KTAT…GIKP), 338–372 (RTRA…GVSP), 373–407 (DEHT…DVQP), 408–442 (NSFV…GVKP), 443–477 (DRQF…GIEP), 478–512 (DRVT…GCLP), 513–547 (CATT…GILP), 548–582 (NVVT…GLKP), 583–617 (SSTM…GLKP), 618–652 (SLLA…GVKP), and 653–687 (DVVT…GCKP).

It belongs to the PPR family. P subfamily. In terms of assembly, interacts with PDE338.

Its subcellular location is the plastid. It localises to the chloroplast stroma. It is found in the chloroplast thylakoid. The protein resides in the chloroplast. Required for chloroplast protein synthesis and accumulation of subunits of the thylakoid protein complexes. Activates psaC and petA translation by binding their 5'-UTRs. Required for the correct processing of petB and petD mRNAs. Interacts with the petB and petD intergenic region and is required for the generation of petB and petD monocistronic RNAs. In Arabidopsis thaliana (Mouse-ear cress), this protein is Pentatricopeptide repeat-containing protein At5g42310, chloroplastic.